Reading from the N-terminus, the 201-residue chain is Adenylyl-sulfate kinase (201 aa).

Residue 35-42 coordinates ATP; it reads GLSGSGKS. S109 acts as the Phosphoserine intermediate in catalysis.

The protein belongs to the APS kinase family.

It carries out the reaction adenosine 5'-phosphosulfate + ATP = 3'-phosphoadenylyl sulfate + ADP + H(+). Its pathway is sulfur metabolism; hydrogen sulfide biosynthesis; sulfite from sulfate: step 2/3. In terms of biological role, catalyzes the synthesis of activated sulfate. In Salmonella gallinarum (strain 287/91 / NCTC 13346), this protein is Adenylyl-sulfate kinase.